We begin with the raw amino-acid sequence, 154 residues long: Large ribosomal subunit protein uL13 (154 aa).

This sequence belongs to the universal ribosomal protein uL13 family. Part of the 50S ribosomal subunit.

In terms of biological role, this protein is one of the early assembly proteins of the 50S ribosomal subunit, although it is not seen to bind rRNA by itself. It is important during the early stages of 50S assembly. This Borrelia garinii subsp. bavariensis (strain ATCC BAA-2496 / DSM 23469 / PBi) (Borreliella bavariensis) protein is Large ribosomal subunit protein uL13.